Consider the following 421-residue polypeptide: Hydrolyase poxO (421 aa).

The Nucleophile role is filled by S239.

This sequence belongs to the AB hydrolase superfamily. FUS2 hydrolase family. As to quaternary structure, homodimer.

It participates in secondary metabolite biosynthesis. Functionally, hydrolyase; part of the gene cluster that mediates the biosynthesis of oxaleimides, cytotoxic compounds containing an unusual disubstituted succinimide moiety. The first step of the pathway is provided by the HR-PKS poxF that serves in a new mode of collaborative biosynthesis with the PKS-NRPS poxE, by providing the olefin containing amino acid substrate via the synthesis of an ACP-bound dec-4-enoate. The cytochrome P450 monooxygenase poxM-catalyzed oxidation at the alpha-position creates the enzyme-bound 2-hydroxydec-4-enoyl-ACP thioester, which may be prone to spontaneous hydrolysis to yield 2-hydroxydec-4-enoic acid due to increased electrophilicity of the carbonyl. 2-hydroxydec-4-enoic acid can then be further oxidized by poxM to yield the alpha-ketoacid 2-oxodec-4-enoicacid, which is reductively aminated by the aminotransferase poxL to yield (S,E)-2-aminodec-4-enoic acid. The Hybrid PKS-NRPS synthetase poxE then performs condensation between the octaketide product of its PKS modules and the amino group of (S,E)-2-aminodec-4-enoic acid which is activated and incorporated by the adenylation domain. The resulting aminoacyl product can be cyclized by the Diels-Alderase PoxQ and reductively released by the reductive (R) domain of poxE to yield an aldehyde intermediate. The released aldehyde is then substrate for a Knoevenagel condensation by the hydrolyase poxO followed by an oxidation at the 5-position of the pyrrolidone ring. The presence of the olefin from the amino acid building block allows for migration of the substituted allyl group to occur. This allylic transposition reaction takes place in a conjugate addition, semipinacol-like fashion to yield a succinimide intermediate. Iterative two-electron oxidations of the C7 methyl of the succinimide intermediate to the carboxylic acid can be catalyzed by one of two remaining cytochrome P450 monooxygenasess poxC or poxD to yield oxaleimide A. Subsequent oxidation yields the maleimide scaffold oxaleimide I. Both oxaleimide A and oxaleimide I can undergo oxidative modifications in the decalin ring to yield the series of products oxaleimides B to H. In Penicillium oxalicum, this protein is Hydrolyase poxO.